A 789-amino-acid chain; its full sequence is Glycerol-3-phosphate acyltransferase (789 aa).

Residues 275-280 (SHRSYI) carry the HXXXXD motif motif.

Belongs to the GPAT/DAPAT family.

The protein localises to the cell membrane. The catalysed reaction is sn-glycerol 3-phosphate + an acyl-CoA = a 1-acyl-sn-glycero-3-phosphate + CoA. It functions in the pathway phospholipid metabolism; CDP-diacylglycerol biosynthesis; CDP-diacylglycerol from sn-glycerol 3-phosphate: step 1/3. In Mycobacterium bovis (strain BCG / Pasteur 1173P2), this protein is Glycerol-3-phosphate acyltransferase.